The following is a 129-amino-acid chain: Small ribosomal subunit protein uS11 (129 aa).

This sequence belongs to the universal ribosomal protein uS11 family. Part of the 30S ribosomal subunit. Interacts with proteins S7 and S18. Binds to IF-3.

Functionally, located on the platform of the 30S subunit, it bridges several disparate RNA helices of the 16S rRNA. Forms part of the Shine-Dalgarno cleft in the 70S ribosome. The sequence is that of Small ribosomal subunit protein uS11 from Salmonella newport (strain SL254).